A 332-amino-acid polypeptide reads, in one-letter code: Anthranilate phosphoribosyltransferase (332 aa).

Residues G79, 82–83, S87, 89–92, 107–115, and S119 each bind 5-phospho-alpha-D-ribose 1-diphosphate; these read GD, NIST, and KHGNRSVSS. G79 is an anthranilate binding site. S91 contributes to the Mg(2+) binding site. N110 lines the anthranilate pocket. R165 contacts anthranilate. D223 and E224 together coordinate Mg(2+).

Belongs to the anthranilate phosphoribosyltransferase family. As to quaternary structure, homodimer. Mg(2+) is required as a cofactor.

The catalysed reaction is N-(5-phospho-beta-D-ribosyl)anthranilate + diphosphate = 5-phospho-alpha-D-ribose 1-diphosphate + anthranilate. The protein operates within amino-acid biosynthesis; L-tryptophan biosynthesis; L-tryptophan from chorismate: step 2/5. Catalyzes the transfer of the phosphoribosyl group of 5-phosphorylribose-1-pyrophosphate (PRPP) to anthranilate to yield N-(5'-phosphoribosyl)-anthranilate (PRA). The sequence is that of Anthranilate phosphoribosyltransferase from Photorhabdus laumondii subsp. laumondii (strain DSM 15139 / CIP 105565 / TT01) (Photorhabdus luminescens subsp. laumondii).